The following is a 1038-amino-acid chain: MATSKPQRSPAEIEDIILRKIFYVTLTESTDSDPRIVYLEMTAAEILSEGKELLLSRDLMERVLIDRLSGDFSDAEPPFPYLIGCHRRAYDESKKIQSMKDKNLRSEMEIVTKQAKKLAVSYCRIHLGNPDMFGNSDKPSGGLDNRLKKRNVSPVLPLIFAEVGSGSLDMFGASSSGVQAPPGFLDEFFKDSDFDSLDSILKELYEDLRSTVINVSVLGDFQPPLRALKYLVSLPVGAKSLVSHEWWVPRGAYMNGRAMELTSILGPFFHISALPDNTLFKSQPDVGQQCFSEASERRPADLLSSFSTIKNFMNILYSGLHDVLMILLKSTDTRERVLQFLAEVINANASRAHIQVDPVSCASSGMFVNLSAVMLRLCEPFLDPHLTKRDKIDPKYAFCGHRLKLSDLTALHASSEEVTEWIGKDAMANANDAGRENGNESRLLQSKEATSSSSNASGQNAKSATKYTFICECFFMTARVLNLGLLKALSDFKHLAQDISRGEDNLATLKAMRDQAPSPQLELDISRMEKELELSSQEKLCHEAQILRDGDFIQRALSFYRLMVVWLVGLVGGFKMPLPSTCPMEFSCMPEHFVEDAMELLIFASRIPKALDGVPLDDFMNFIIMFMASPEYVRNPYLRAKMVEVLNCWMPRSSSSSSATSTLFEGHQLSLEYLVRNLLKLYVDIEFTGSHTQFYDKFNIRHNIAELLEYLWQVPSHRNAWRRIAKDEEKGVYLNFLNFLVNDSIYLLDESLNKILEIKQIEADMSNTAEWEQRPTQERQERTRLFHSQENIVRIDMKLANEDVTMLAFTSEEITAPFLLPEMVERVANMLNYFLLQLVGPQRKSLSLKDPEKYEFRPKQLLKQIVRIYVNLARGDTVNIFPGAISSDGRSYNEQLFNAGADVLRRIGEEGRIIQEFMELGTKAKAAASEALDAEAALGEIPDEFLDPIQYTLMRDPVILPSSRITVDRPIIQRHLLSDNHDPFNRAHLTSDMLIPDIELKAKIDEFVKSHQSKKRTSGEDSSNKERIQTTNSDMLID.

Disordered regions lie at residues 430–459 (ANDAGRENGNESRLLQSKEATSSSSNASGQ) and 1010–1038 (SHQSKKRTSGEDSSNKERIQTTNSDMLID). Low complexity predominate over residues 446–459 (SKEATSSSSNASGQ). The U-box domain maps to 940-1014 (EIPDEFLDPI…DEFVKSHQSK (75 aa)). The segment covering 1017-1028 (TSGEDSSNKERI) has biased composition (basic and acidic residues). The span at 1029–1038 (QTTNSDMLID) shows a compositional bias: polar residues.

It belongs to the ubiquitin conjugation factor E4 family.

The protein resides in the cytoplasm. The protein localises to the nucleus. The enzyme catalyses S-ubiquitinyl-[E2 ubiquitin-conjugating enzyme]-L-cysteine + [acceptor protein]-L-lysine = [E2 ubiquitin-conjugating enzyme]-L-cysteine + N(6)-ubiquitinyl-[acceptor protein]-L-lysine.. It functions in the pathway protein modification; protein ubiquitination. Its function is as follows. Ubiquitin-protein ligase that may function as an E3 ligase in conjunction with specific E1 and E2 ligases. May also function as an E4 ligase mediating the assembly of polyubiquitin chain assembly on substrates monoubiquitinated by another E3 ubiquitin ligase. This is Probable ubiquitin conjugation factor E4 (PUB1) from Arabidopsis thaliana (Mouse-ear cress).